A 67-amino-acid polypeptide reads, in one-letter code: Theromin (67 aa).

The 26-residue stretch at 2–27 folds into the Antistasin-like domain; that stretch reads CENTECPRACPGEYEFDEDGCNTCVC.

As to quaternary structure, homodimer. In terms of processing, eight disulfide bonds are present.

The protein resides in the secreted. Its function is as follows. Potent thrombin-specific inhibitor. This Theromyzon tessulatum (Duck leech) protein is Theromin.